We begin with the raw amino-acid sequence, 262 residues long: MILDDIVRDKKLQLIEDKKALSLDDIKSKLNSLNLDKRNFKEALEKENISIIAEIKKASPSKGVIREDFNPVKIGQIYENINIDAVSILTEKKYFLGKNEYIKIVKEVNSKPILRKDFIVDEYQLYEAKLIGADAVLLIAAVLKDKLECFYNRTLELGLDSITEVHNEEEAKLASEIGCSIIGINNRDLRDFSTDITTTKRLMKYVPRDRIIVSESSIKTPEDILYLRSIGVNAVLIGETFMRNIDDLKGINEFLKKAKDNG.

This sequence belongs to the TrpC family.

It catalyses the reaction 1-(2-carboxyphenylamino)-1-deoxy-D-ribulose 5-phosphate + H(+) = (1S,2R)-1-C-(indol-3-yl)glycerol 3-phosphate + CO2 + H2O. It participates in amino-acid biosynthesis; L-tryptophan biosynthesis; L-tryptophan from chorismate: step 4/5. The sequence is that of Indole-3-glycerol phosphate synthase from Clostridium acetobutylicum (strain ATCC 824 / DSM 792 / JCM 1419 / IAM 19013 / LMG 5710 / NBRC 13948 / NRRL B-527 / VKM B-1787 / 2291 / W).